The following is a 43-amino-acid chain: Protein PsbN (43 aa).

A helical transmembrane segment spans residues 5–27 (TLVAISISRLLVSFTGYALYTAF).

This sequence belongs to the PsbN family.

The protein localises to the plastid. It localises to the chloroplast thylakoid membrane. In terms of biological role, may play a role in photosystem I and II biogenesis. The protein is Protein PsbN of Cycas taitungensis (Prince sago).